Consider the following 144-residue polypeptide: Ribosomal RNA large subunit methyltransferase H (144 aa).

S-adenosyl-L-methionine is bound by residues Leu-63, Gly-92, and Leu-111–Phe-116.

The protein belongs to the RNA methyltransferase RlmH family. Homodimer.

It localises to the cytoplasm. The enzyme catalyses pseudouridine(1915) in 23S rRNA + S-adenosyl-L-methionine = N(3)-methylpseudouridine(1915) in 23S rRNA + S-adenosyl-L-homocysteine + H(+). In terms of biological role, specifically methylates the pseudouridine at position 1915 (m3Psi1915) in 23S rRNA. This Parasynechococcus marenigrum (strain WH8102) protein is Ribosomal RNA large subunit methyltransferase H.